A 345-amino-acid chain; its full sequence is Diacylglycerol O-acyltransferase 1 (345 aa).

The Cytoplasmic segment spans residues 1–49 (MSEETSIPGIIASTPPISKDSRRNVSHWLQALAVFLHSVSLTLTASWYT). A helical membrane pass occupies residues 50–70 (VLWAFLPFWPFLIVYLIWLIY). At 71 to 113 (DDGFVTGKDRQKRWLRNAPPYRWFCHYFPIRLHKTTELDSEKN) the chain is on the lumenal side. Residues 114 to 134 (YIFGYHPHGIISLGAFGGFAS) form a helical membrane-spanning segment. Residues 135 to 141 (EGADFSK) are Cytoplasmic-facing. The helical transmembrane segment at 142 to 162 (LFPGINVSVLTLNSNFYVPVY) threads the bilayer. Residues 163–216 (RDYLMALNINSVSKKSCVSILSRKPGDSVLIVIGGAQESLLSRPGQNNLVLKKR) are Lumenal-facing. The helical transmembrane segment at 217–237 (FGFVKLAFLTGSSLVPCFAFG) threads the bilayer. The Cytoplasmic portion of the chain corresponds to 238–345 (ESDIFEQVDN…NRISELKLSA (108 aa)).

It belongs to the diacylglycerol acyltransferase family.

It localises to the lipid droplet. The protein resides in the endoplasmic reticulum membrane. It carries out the reaction an acyl-CoA + a 1,2-diacyl-sn-glycerol = a triacyl-sn-glycerol + CoA. It catalyses the reaction a 2-acylglycerol + an acyl-CoA = a 1,2-diacyl-sn-glycerol + CoA. It functions in the pathway glycerolipid metabolism; triacylglycerol biosynthesis. Its function is as follows. Catalyzes the terminal and only committed step in triacylglycerol (TAG) synthesis by using diacylglycerol (DAG) and fatty acyl-CoA as substrates. Required for storage lipid synthesis. Major DAG esterifying enzyme in stationary phase when TAG production is particularly active. Involved in lipid particle synthesis from the endoplasmic reticulum, promoting localized TAG production at discrete ER subdomains. The protein is Diacylglycerol O-acyltransferase 1 (dga1) of Schizosaccharomyces pombe (strain 972 / ATCC 24843) (Fission yeast).